Here is a 162-residue protein sequence, read N- to C-terminus: Small ribosomal subunit protein uS5 (162 aa).

The 64-residue stretch at 11–74 (LTDRVVHISR…EQAKKNLIKV (64 aa)) folds into the S5 DRBM domain.

It belongs to the universal ribosomal protein uS5 family. In terms of assembly, part of the 30S ribosomal subunit. Contacts proteins S4 and S8.

Its function is as follows. With S4 and S12 plays an important role in translational accuracy. In terms of biological role, located at the back of the 30S subunit body where it stabilizes the conformation of the head with respect to the body. The protein is Small ribosomal subunit protein uS5 of Pelobacter propionicus (strain DSM 2379 / NBRC 103807 / OttBd1).